Here is a 285-residue protein sequence, read N- to C-terminus: Pantothenate synthetase (285 aa).

30-37 (MGFLHEGH) lines the ATP pocket. Histidine 37 (proton donor) is an active-site residue. A (R)-pantoate-binding site is contributed by glutamine 61. Position 61 (glutamine 61) interacts with beta-alanine. Residue 147-150 (GQKD) participates in ATP binding. A (R)-pantoate-binding site is contributed by glutamine 153. ATP is bound by residues valine 176 and 184–187 (KSSR).

Belongs to the pantothenate synthetase family. Homodimer.

Its subcellular location is the cytoplasm. It carries out the reaction (R)-pantoate + beta-alanine + ATP = (R)-pantothenate + AMP + diphosphate + H(+). It participates in cofactor biosynthesis; (R)-pantothenate biosynthesis; (R)-pantothenate from (R)-pantoate and beta-alanine: step 1/1. In terms of biological role, catalyzes the condensation of pantoate with beta-alanine in an ATP-dependent reaction via a pantoyl-adenylate intermediate. This chain is Pantothenate synthetase, found in Listeria innocua serovar 6a (strain ATCC BAA-680 / CLIP 11262).